The primary structure comprises 583 residues: MLO-like protein 6 (583 aa).

The Extracellular segment spans residues 1–15; it reads MADQVKEKTLEETST. The chain crosses the membrane as a helical span at residues 16–36; that stretch reads WAVAVVCFVLLLISIVIEKLI. Topologically, residues 37–61 are cytoplasmic; sequence HKIGSWFKKKNKKALYEALEKVKAE. A helical transmembrane segment spans residues 62-82; the sequence is LMLMGFISLLLTIGQGYISNI. Residues 83-161 lie on the Extracellular side of the membrane; sequence CIPKNIAASM…VSAYGMHQLH (79 aa). Residues 162-182 traverse the membrane as a helical segment; it reads IFIFVLAVCHVIYCIVTYALG. The Cytoplasmic portion of the chain corresponds to 183 to 284; the sequence is KTKMRRWKKW…KYIQRSLEED (102 aa). The chain crosses the membrane as a helical span at residues 285–305; that stretch reads FKTIVEINPVIWFIAVLFLLT. The Extracellular segment spans residues 306–314; it reads NTNGLNSYL. The helical transmembrane segment at 315–335 threads the bilayer; that stretch reads WLPFIPFIVILIVGTKLQVII. Over 336-368 the chain is Cytoplasmic; it reads TKLGLRIQEKGDVVKGTPLVQPGDHFFWFGRPR. A helical transmembrane segment spans residues 369 to 389; it reads FILFLIHLVLFTNAFQLAFFV. Topologically, residues 390 to 411 are extracellular; the sequence is WSTYEFGLKNCFHESRVDVIIR. A helical transmembrane segment spans residues 412 to 432; it reads ISIGLLVQILCSYVTLPLYAL. The Cytoplasmic segment spans residues 433–583; it reads VTQMGSKMKP…ISLRDFSFKR (151 aa). The segment at 447-468 is calmodulin-binding; that stretch reads ERVATALKSWHHTAKKNIKHGR. Residues 461–583 are disordered; the sequence is KKNIKHGRTS…ISLRDFSFKR (123 aa). A compositionally biased stretch (low complexity) spans 470–484; the sequence is SESTTPFSSRPTTPT. Residues 541-551 are compositionally biased toward basic and acidic residues; the sequence is RFGEEESEKKF.

Belongs to the MLO family.

The protein localises to the membrane. May be involved in modulation of pathogen defense and leaf cell death. Activity seems to be regulated by Ca(2+)-dependent calmodulin binding and seems not to require heterotrimeric G proteins. In Arabidopsis thaliana (Mouse-ear cress), this protein is MLO-like protein 6 (MLO6).